Here is a 169-residue protein sequence, read N- to C-terminus: Large ribosomal subunit protein uL10 (169 aa).

Belongs to the universal ribosomal protein uL10 family. As to quaternary structure, part of the ribosomal stalk of the 50S ribosomal subunit. The N-terminus interacts with L11 and the large rRNA to form the base of the stalk. The C-terminus forms an elongated spine to which L12 dimers bind in a sequential fashion forming a multimeric L10(L12)X complex.

Its function is as follows. Forms part of the ribosomal stalk, playing a central role in the interaction of the ribosome with GTP-bound translation factors. This is Large ribosomal subunit protein uL10 from Rickettsia massiliae (strain Mtu5).